The sequence spans 230 residues: Mitochondrial fission factor homolog B (230 aa).

Topologically, residues 1–210 are cytoplasmic; it reads MSGAAFPSPT…ENKERAKREM (210 aa). A disordered region spans residues 117-153; sequence EQTSSVSHPSEEVRTQTKTRRERSVSENAGVHHNGPL. Residue Ser-142 is modified to Phosphoserine. Residues 179–210 adopt a coiled-coil conformation; it reads VDATSLRRQIVKLNRRLQLLEEENKERAKREM. The chain crosses the membrane as a helical; Anchor for type IV membrane protein span at residues 211 to 228; that stretch reads VMYSITVAFWLVNSWVWF. Over 229–230 the chain is Extracellular; it reads RR.

Belongs to the Tango11 family.

Its subcellular location is the mitochondrion outer membrane. It localises to the peroxisome. Its function is as follows. Plays a role in mitochondrial and peroxisomal fission. Promotes the recruitment and association of the fission mediator dynamin-related protein 1 (DNM1L) to the mitochondrial surface. The chain is Mitochondrial fission factor homolog B from Danio rerio (Zebrafish).